We begin with the raw amino-acid sequence, 715 residues long: Palmitoyltransferase ZDHHC5 (715 aa).

The Cytoplasmic portion of the chain corresponds to Met1–Lys13. A helical transmembrane segment spans residues Tyr14–Phe34. At Thr35–Gly38 the chain is on the extracellular side. A helical membrane pass occupies residues Leu39–Leu59. Residues Ala60–Tyr148 are Cytoplasmic-facing. Phosphotyrosine is present on Tyr91. The region spanning Lys104–Leu154 is the DHHC domain. Residue Cys134 is the S-palmitoyl cysteine intermediate of the active site. Residues Phe149–Leu169 form a helical membrane-spanning segment. Topologically, residues Tyr170–Cys191 are extracellular. The helical transmembrane segment at Val192–Ala212 threads the bilayer. Topologically, residues Arg213–Val715 are cytoplasmic. A phosphoserine mark is found at Ser247, Ser296, and Ser299. A disordered region spans residues Gly289–Glu648. Thr303 carries the phosphothreonine modification. At Ser345 the chain carries Phosphoserine. Thr348 and Thr350 each carry phosphothreonine. Positions Ser359 to Ala373 are enriched in low complexity. Phosphoserine occurs at positions 380, 398, 406, and 409. Thr411 carries the phosphothreonine modification. Residues Ser415, Ser425, Ser429, and Ser432 each carry the phosphoserine modification. A compositionally biased stretch (low complexity) spans Ser422–Ser432. Thr436 carries the post-translational modification Phosphothreonine. The segment covering Gln442–Asp478 has biased composition (polar residues). 2 positions are modified to phosphoserine: Ser529 and Ser554. Arg617 is subject to Omega-N-methylarginine. Position 621 is a phosphoserine (Ser621). At Thr659 the chain carries Phosphothreonine. Positions Leu666–Val715 are disordered. Polar residues predominate over residues Thr668–Ser679. The span at Gly681 to Pro695 shows a compositional bias: low complexity. Phosphoserine occurs at positions 684 and 694. Arg697 carries the post-translational modification Omega-N-methylarginine.

The protein belongs to the DHHC palmitoyltransferase family. ERF2/ZDHHC9 subfamily. Post-translationally, phosphorylation regulates association with endocytic proteins and its subcellular localization. Phosphorylation by LYN during fatty acid uptake leads to inactivation of the activity. In terms of processing, autopalmitoylated. Palmitoylation of the C-terminal tail regulates stimulation-dependent plasma membrane motility.

The protein resides in the cell membrane. The enzyme catalyses L-cysteinyl-[protein] + hexadecanoyl-CoA = S-hexadecanoyl-L-cysteinyl-[protein] + CoA. In terms of biological role, palmitoyltransferase that catalyzes the addition of palmitate onto various protein substrates such as CTNND2, CD36, GSDMD, NLRP3, NOD1, NOD2, STAT3 and S1PR1 thus plays a role in various biological processes including cell adhesion, inflammation, fatty acid uptake, bacterial sensing or cardiac functions. Plays an important role in the regulation of synapse efficacy by mediating palmitoylation of delta-catenin/CTNND2, thereby increasing synaptic delivery and surface stabilization of alpha-amino-3-hydroxy-5-methyl-4-isoxazole propionic acid receptors (AMPARs). Under basal conditions, remains at the synaptic membrane through FYN-mediated phosphorylation that prevents association with endocytic proteins. Neuronal activity enhances the internalization and trafficking of DHHC5 from spines to dendritic shafts where it palmitoylates delta-catenin/CTNND2. Regulates cell adhesion at the plasma membrane by palmitoylating GOLGA7B and DSG2. Plays a role in innate immune response by mediating the palmitoylation of NOD1 and NOD2 and their proper recruitment to the bacterial entry site and phagosomes. Also participates in fatty acid uptake by palmitoylating CD36 and thereby targeting it to the plasma membrane. Upon binding of fatty acids to CD36, gets phosphorylated by LYN leading to inactivation and subsequent CD36 caveolar endocytosis. Controls oligodendrocyte development by catalyzing STAT3 palmitoylation. Acts as a regulator of inflammatory response by mediating palmitoylation of NLRP3 and GSDMD. Palmitoylates NLRP3 to promote inflammasome assembly and activation. Activates pyroptosis by catalyzing palmitoylation of gasdermin-D (GSDMD), thereby promoting membrane translocation and pore formation of GSDMD. In Canis lupus familiaris (Dog), this protein is Palmitoyltransferase ZDHHC5 (ZDHHC5).